A 251-amino-acid polypeptide reads, in one-letter code: Astacin (251 aa).

Positions Met-1–Ala-15 are cleaved as a signal peptide. A propeptide spans Ser-16–Gly-49 (activation peptide). One can recognise a Peptidase M12A domain in the interval Ala-50 to Ser-248. Intrachain disulfides connect Cys-91-Cys-247 and Cys-113-Cys-133. His-141 is a binding site for Zn(2+). Glu-142 is a catalytic residue. The Zn(2+) site is built by His-145 and His-151. A propeptide spanning residues Arg-250–His-251 is cleaved from the precursor.

Monomer. Zn(2+) is required as a cofactor.

It carries out the reaction Hydrolysis of peptide bonds in substrates containing five or more amino acids, preferentially with Ala in P1', and Pro in P2'.. In terms of biological role, metalloprotease. This protease prefers to cleave in front of small aliphatic residues (P1'). The presence of Lys or Arg in the P1 and P2 position yields high-turnover substrates. In the P3 position the enzyme prefers Pro &gt; Val &gt; Leu &gt; Ala &gt; Gly. The polypeptide is Astacin (Astacus astacus (Noble crayfish)).